The chain runs to 62 residues: UPF0434 protein Tola_2233 (62 aa).

Belongs to the UPF0434 family.

This chain is UPF0434 protein Tola_2233, found in Tolumonas auensis (strain DSM 9187 / NBRC 110442 / TA 4).